The chain runs to 942 residues: UvrABC system protein A (942 aa).

32–39 (GLSGSGKS) is a binding site for ATP. Residues 251–278 (CPVCGFTVPELEPRLFSFNAPFGSCPTC) form a C4-type zinc finger. 2 ABC transporter domains span residues 308–589 (WNPI…KKSI) and 609–937 (GNGR…HYLK). Residue 641–648 (GVSGSGKS) coordinates ATP. Residues 740 to 766 (CEACSGDGIIKIEMHFLPDVYVPCEVC) form a C4-type zinc finger.

The protein belongs to the ABC transporter superfamily. UvrA family. As to quaternary structure, forms a heterotetramer with UvrB during the search for lesions.

The protein resides in the cytoplasm. The UvrABC repair system catalyzes the recognition and processing of DNA lesions. UvrA is an ATPase and a DNA-binding protein. A damage recognition complex composed of 2 UvrA and 2 UvrB subunits scans DNA for abnormalities. When the presence of a lesion has been verified by UvrB, the UvrA molecules dissociate. This is UvrABC system protein A from Streptococcus pyogenes serotype M3 (strain ATCC BAA-595 / MGAS315).